We begin with the raw amino-acid sequence, 203 residues long: METLSQDSLLECQICFNYYSPRRRPKLLDCKRTCCSVCLQQMRACQKDLRCPWCRGVTKLPPGYSVSQLPDDPDVVAVITIPHASENTPVFIKLPSNGCYMWPLPVSKERALLPGDIGCRLLPGNQQKPVTVVTMPMEQQPLHGNIPQDIVEEEHERRGVVKSSTWSGICTVILVACVLVFLLGIVLHNMSCISKRFTVISCG.

The segment at 12 to 55 (CQICFNYYSPRRRPKLLDCKRTCCSVCLQQMRACQKDLRCPWCR) adopts an RING-type; degenerate zinc-finger fold. Residues 167–187 (SGICTVILVACVLVFLLGIVL) traverse the membrane as a helical segment.

The protein belongs to the RNF152 family.

The protein resides in the lysosome membrane. It carries out the reaction S-ubiquitinyl-[E2 ubiquitin-conjugating enzyme]-L-cysteine + [acceptor protein]-L-lysine = [E2 ubiquitin-conjugating enzyme]-L-cysteine + N(6)-ubiquitinyl-[acceptor protein]-L-lysine.. The protein operates within protein modification; protein ubiquitination. Its function is as follows. E3 ubiquitin-protein ligase that acts as a negative regulator of mTORC1 signaling by mediating ubiquitination of RagA/RRAGA and RHEB. Catalyzes 'Lys-63'-linked polyubiquitination of RagA/RRAGA in response to amino acid starvation, thereby regulating mTORC1 signaling. Also mediates monoubiquitination of RHEB, promoting its association with the TSC-TBC complex and subsequent inhibition. Also mediates 'Lys-48'-linked polyubiquitination of target proteins and their subsequent targeting to the proteasome for degradation. This Xenopus laevis (African clawed frog) protein is E3 ubiquitin-protein ligase rnf152-A.